The sequence spans 66 residues: 14-3-3-like protein 2 (66 aa).

The protein belongs to the 14-3-3 family.

This chain is 14-3-3-like protein 2, found in Pseudotsuga menziesii (Douglas-fir).